The following is a 199-amino-acid chain: Recombination protein RecR (199 aa).

Residues 57–72 (CQSCRTYTEESLCPIC) form a C4-type zinc finger. Residues 81-176 (STICVVETPA…VISRIAHGVP (96 aa)) enclose the Toprim domain.

Belongs to the RecR family.

Functionally, may play a role in DNA repair. It seems to be involved in an RecBC-independent recombinational process of DNA repair. It may act with RecF and RecO. This chain is Recombination protein RecR, found in Shewanella sp. (strain ANA-3).